Here is a 276-residue protein sequence, read N- to C-terminus: 2-dehydro-3-deoxyphosphooctonate aldolase (276 aa).

The protein belongs to the KdsA family.

It localises to the cytoplasm. The catalysed reaction is D-arabinose 5-phosphate + phosphoenolpyruvate + H2O = 3-deoxy-alpha-D-manno-2-octulosonate-8-phosphate + phosphate. It participates in carbohydrate biosynthesis; 3-deoxy-D-manno-octulosonate biosynthesis; 3-deoxy-D-manno-octulosonate from D-ribulose 5-phosphate: step 2/3. The protein operates within bacterial outer membrane biogenesis; lipopolysaccharide biosynthesis. This Xanthomonas campestris pv. campestris (strain 8004) protein is 2-dehydro-3-deoxyphosphooctonate aldolase.